Reading from the N-terminus, the 481-residue chain is uncharacterized protein (481 aa).

To M.tuberculosis RV2411c.

This is an uncharacterized protein from Synechocystis sp. (strain ATCC 27184 / PCC 6803 / Kazusa).